The sequence spans 248 residues: Transcription termination/antitermination protein NusG (248 aa).

The 31-residue stretch at 197-227 (KGDQVRVIEGPFMNFTGTVEEVHPEKRKLTV) folds into the KOW domain.

This sequence belongs to the NusG family. Monomer. Homodimer.

In terms of biological role, participates in transcription elongation, termination and antitermination. The polypeptide is Transcription termination/antitermination protein NusG (Aquifex aeolicus (strain VF5)).